The following is a 126-amino-acid chain: Ribonuclease P protein component (126 aa).

It belongs to the RnpA family. Consists of a catalytic RNA component (M1 or rnpB) and a protein subunit.

The catalysed reaction is Endonucleolytic cleavage of RNA, removing 5'-extranucleotides from tRNA precursor.. RNaseP catalyzes the removal of the 5'-leader sequence from pre-tRNA to produce the mature 5'-terminus. It can also cleave other RNA substrates such as 4.5S RNA. The protein component plays an auxiliary but essential role in vivo by binding to the 5'-leader sequence and broadening the substrate specificity of the ribozyme. This Synechococcus sp. (strain JA-3-3Ab) (Cyanobacteria bacterium Yellowstone A-Prime) protein is Ribonuclease P protein component.